We begin with the raw amino-acid sequence, 158 residues long: Serine-protein kinase RsbW (158 aa).

The protein belongs to the anti-sigma-factor family.

It catalyses the reaction L-seryl-[protein] + ATP = O-phospho-L-seryl-[protein] + ADP + H(+). It carries out the reaction L-threonyl-[protein] + ATP = O-phospho-L-threonyl-[protein] + ADP + H(+). Negative regulator of sigma-B activity. Phosphorylates and inactivates its specific antagonist protein, RsbV. Upon phosphorylation of RsbV, RsbW is released and binds to sigma-B, thereby blocking its ability to form an RNA polymerase holoenzyme (E-sigma-B). The polypeptide is Serine-protein kinase RsbW (Oceanobacillus iheyensis (strain DSM 14371 / CIP 107618 / JCM 11309 / KCTC 3954 / HTE831)).